A 65-amino-acid chain; its full sequence is Stress-associated endoplasmic reticulum protein 2 (65 aa).

A helical membrane pass occupies residues 38–58 (GPWLLALFVFVVCGSAIFQII).

Belongs to the RAMP4 family. Interacts with SEC61B, SEC61A1 and the SEC61 complex. Interacts with CANX.

It is found in the membrane. It localises to the endoplasmic reticulum membrane. Functionally, interacts with target proteins during their translocation into the lumen of the endoplasmic reticulum. Protects unfolded target proteins against degradation during ER stress. May facilitate glycosylation of target proteins after termination of ER stress. May modulate the use of N-glycosylation sites on target proteins. In Bos taurus (Bovine), this protein is Stress-associated endoplasmic reticulum protein 2 (SERP2).